Consider the following 344-residue polypeptide: Holliday junction branch migration complex subunit RuvB (344 aa).

Residues M1–Y185 are large ATPase domain (RuvB-L). Residues L24, R25, G66, K69, T70, S71, E132 to F134, R175, Y185, and R222 each bind ATP. T70 serves as a coordination point for Mg(2+). Positions E186 to D256 are small ATPAse domain (RuvB-S). Positions E259–E344 are head domain (RuvB-H). Residues R314 and R319 each coordinate DNA.

The protein belongs to the RuvB family. As to quaternary structure, homohexamer. Forms an RuvA(8)-RuvB(12)-Holliday junction (HJ) complex. HJ DNA is sandwiched between 2 RuvA tetramers; dsDNA enters through RuvA and exits via RuvB. An RuvB hexamer assembles on each DNA strand where it exits the tetramer. Each RuvB hexamer is contacted by two RuvA subunits (via domain III) on 2 adjacent RuvB subunits; this complex drives branch migration. In the full resolvosome a probable DNA-RuvA(4)-RuvB(12)-RuvC(2) complex forms which resolves the HJ.

It is found in the cytoplasm. It catalyses the reaction ATP + H2O = ADP + phosphate + H(+). Functionally, the RuvA-RuvB-RuvC complex processes Holliday junction (HJ) DNA during genetic recombination and DNA repair, while the RuvA-RuvB complex plays an important role in the rescue of blocked DNA replication forks via replication fork reversal (RFR). RuvA specifically binds to HJ cruciform DNA, conferring on it an open structure. The RuvB hexamer acts as an ATP-dependent pump, pulling dsDNA into and through the RuvAB complex. RuvB forms 2 homohexamers on either side of HJ DNA bound by 1 or 2 RuvA tetramers; 4 subunits per hexamer contact DNA at a time. Coordinated motions by a converter formed by DNA-disengaged RuvB subunits stimulates ATP hydrolysis and nucleotide exchange. Immobilization of the converter enables RuvB to convert the ATP-contained energy into a lever motion, pulling 2 nucleotides of DNA out of the RuvA tetramer per ATP hydrolyzed, thus driving DNA branch migration. The RuvB motors rotate together with the DNA substrate, which together with the progressing nucleotide cycle form the mechanistic basis for DNA recombination by continuous HJ branch migration. Branch migration allows RuvC to scan DNA until it finds its consensus sequence, where it cleaves and resolves cruciform DNA. This chain is Holliday junction branch migration complex subunit RuvB, found in Mycobacterium tuberculosis (strain ATCC 25177 / H37Ra).